We begin with the raw amino-acid sequence, 442 residues long: Hydroxycinnamoyltransferase 2 (442 aa).

Catalysis depends on proton acceptor residues H159 and D389.

The protein belongs to the plant acyltransferase family. Expressed in roots and leaves. Expressed at low levels in stems and seeds.

In terms of biological role, hydroxycinnamoyl transferase that catalyzes the transfer of an acyl from p-coumaryol-CoA to various acyl acceptors. Can use feruloyl-CoA and caffeoyl-CoA as acyl donors. This Oryza sativa subsp. japonica (Rice) protein is Hydroxycinnamoyltransferase 2.